We begin with the raw amino-acid sequence, 173 residues long: Protein FAM180A (173 aa).

Residues 1-17 form the signal peptide; it reads MHWKMLLLLLLYYNAEA.

Belongs to the FAM180 family.

It localises to the secreted. The chain is Protein FAM180A (FAM180A) from Homo sapiens (Human).